The following is a 372-amino-acid chain: Cytochrome b (372 aa).

Helical transmembrane passes span 25–45, 69–90, 105–125, and 170–190; these read FGSMLLTCLAMQTLTGFFLAI, WTMQNLHAIGASMFFICIYIHI, WLSGITLLITLMATAFFGYVL, and FFALHFILPFIIISLTSIHII. The heme b site is built by His-75 and His-89. Residues His-174 and His-188 each coordinate heme b. A ubiquinone is bound at residue His-193. 4 helical membrane passes run 218-238, 280-300, 312-332, and 339-358; these read YKDMLMVTTMITLLFLILSFS, LGGTLALLMSIAILMTTPFTH, LTQILFWTLVATFITLTWTAT, and FIIISQMTSIFYFFFFIMNP.

Belongs to the cytochrome b family. The cytochrome bc1 complex contains 3 respiratory subunits (MT-CYB, CYC1 and UQCRFS1), 2 core proteins (UQCRC1 and UQCRC2) and probably 6 low-molecular weight proteins. Heme b is required as a cofactor.

It is found in the mitochondrion inner membrane. Functionally, component of the ubiquinol-cytochrome c reductase complex (complex III or cytochrome b-c1 complex) that is part of the mitochondrial respiratory chain. The b-c1 complex mediates electron transfer from ubiquinol to cytochrome c. Contributes to the generation of a proton gradient across the mitochondrial membrane that is then used for ATP synthesis. The polypeptide is Cytochrome b (MT-CYB) (Ophiophagus hannah (King cobra)).